Here is a 503-residue protein sequence, read N- to C-terminus: Lysine--tRNA ligase (503 aa).

2 residues coordinate Mg(2+): glutamate 414 and glutamate 421.

It belongs to the class-II aminoacyl-tRNA synthetase family. Homodimer. The cofactor is Mg(2+).

It is found in the cytoplasm. The enzyme catalyses tRNA(Lys) + L-lysine + ATP = L-lysyl-tRNA(Lys) + AMP + diphosphate. The protein is Lysine--tRNA ligase of Neisseria gonorrhoeae (strain NCCP11945).